We begin with the raw amino-acid sequence, 481 residues long: UDP-glucose 6-dehydrogenase 1 (481 aa).

Residues 8–13, aspartate 33, arginine 38, 86–90, 127–128, and glutamate 162 each bind NAD(+); these read GAGYVG, VNTPT, and ST. Residues 158–162, 217–224, and 257–270 each bind substrate; these read EFLAE, KLAANAFL, and RIGAKFLNASVGFG. Cysteine 273 serves as the catalytic Nucleophile. 273–276 is an NAD(+) binding site; that stretch reads CFQK. A substrate-binding site is contributed by 335-336; that stretch reads FK. Residue arginine 343 participates in NAD(+) binding. Serine 394 is modified (phosphoserine). Arginine 448 contacts substrate.

This sequence belongs to the UDP-glucose/GDP-mannose dehydrogenase family.

The catalysed reaction is UDP-alpha-D-glucose + 2 NAD(+) + H2O = UDP-alpha-D-glucuronate + 2 NADH + 3 H(+). It participates in nucleotide-sugar biosynthesis; UDP-alpha-D-glucuronate biosynthesis; UDP-alpha-D-glucuronate from UDP-alpha-D-glucose: step 1/1. Its function is as follows. Involved in the biosynthesis of UDP-glucuronic acid (UDP-GlcA), providing nucleotide sugars for cell-wall polymers. In Oryza sativa subsp. japonica (Rice), this protein is UDP-glucose 6-dehydrogenase 1 (UGD1).